Reading from the N-terminus, the 258-residue chain is Deoxyribose-phosphate aldolase (258 aa).

The Proton donor/acceptor role is filled by aspartate 102. Lysine 165 (schiff-base intermediate with acetaldehyde) is an active-site residue. Lysine 199 functions as the Proton donor/acceptor in the catalytic mechanism.

Belongs to the DeoC/FbaB aldolase family. DeoC type 2 subfamily.

The protein resides in the cytoplasm. It carries out the reaction 2-deoxy-D-ribose 5-phosphate = D-glyceraldehyde 3-phosphate + acetaldehyde. It functions in the pathway carbohydrate degradation; 2-deoxy-D-ribose 1-phosphate degradation; D-glyceraldehyde 3-phosphate and acetaldehyde from 2-deoxy-alpha-D-ribose 1-phosphate: step 2/2. Functionally, catalyzes a reversible aldol reaction between acetaldehyde and D-glyceraldehyde 3-phosphate to generate 2-deoxy-D-ribose 5-phosphate. The protein is Deoxyribose-phosphate aldolase of Vibrio vulnificus (strain CMCP6).